We begin with the raw amino-acid sequence, 137 residues long: Glutamate mutase sigma subunit (137 aa).

Residues 3–137 (KKTIVLGVIG…ADMKEVLGVE (135 aa)) enclose the B12-binding domain. Adenosylcob(III)alamin-binding positions include 13-17 (SDCHA), His16, 61-63 (SSL), and 93-97 (NIVVG).

The protein belongs to the methylaspartate mutase GlmS subunit family. Heterotetramer composed of 2 epsilon subunits (GlmE) and 2 sigma subunits (GlmS). GlmE exists as a homodimer and GlmS as a monomer. It depends on adenosylcob(III)alamin as a cofactor.

It carries out the reaction (2S,3S)-3-methyl-L-aspartate = L-glutamate. It functions in the pathway amino-acid degradation; L-glutamate degradation via mesaconate pathway; acetate and pyruvate from L-glutamate: step 1/4. Its function is as follows. Catalyzes the carbon skeleton rearrangement of L-glutamate to L-threo-3-methylaspartate ((2S,3S)-3-methylaspartate). The polypeptide is Glutamate mutase sigma subunit (Clostridium tetanomorphum).